A 555-amino-acid polypeptide reads, in one-letter code: Energy-dependent translational throttle protein EttA (555 aa).

2 consecutive ABC transporter domains span residues 6-259 (YTMH…AQEA) and 324-550 (LEVS…RIKY). 39–46 (GLNGAGKS) lines the ATP pocket. Residues 95 to 139 (SEVVNALKRLDEVYALYADPDADFDKLAAEQGRLEEIIQAHDGHN) form an arm region. The interval 242–322 (GNYSSWLEQK…IPPGPRLGDK (81 aa)) is ptIM. Residue 356-363 (GPNGAGKS) coordinates ATP.

Belongs to the ABC transporter superfamily. ABCF family. Translational throttle EttA subfamily. In terms of assembly, monomer. Probably contacts ribosomal proteins L1, L5, L33 and S7, the 16S and 23S rRNA and the P-site containing tRNA(fMet).

It localises to the cytoplasm. The catalysed reaction is ATP + H2O = ADP + phosphate + H(+). Its function is as follows. A translation factor that gates the progression of the 70S ribosomal initiation complex (IC, containing tRNA(fMet) in the P-site) into the translation elongation cycle by using a mechanism sensitive to the ATP/ADP ratio. Binds to the 70S ribosome E-site where it modulates the state of the translating ribosome during subunit translocation. ATP hydrolysis probably frees it from the ribosome, which can enter the elongation phase. This is Energy-dependent translational throttle protein EttA from Escherichia coli O6:H1 (strain CFT073 / ATCC 700928 / UPEC).